We begin with the raw amino-acid sequence, 124 residues long: Aspartate 1-decarboxylase (124 aa).

The Schiff-base intermediate with substrate; via pyruvic acid role is filled by Ser25. At Ser25 the chain carries Pyruvic acid (Ser). Thr57 is a binding site for substrate. Catalysis depends on Tyr58, which acts as the Proton donor. 73–75 (GAA) provides a ligand contact to substrate.

The protein belongs to the PanD family. As to quaternary structure, heterooctamer of four alpha and four beta subunits. The cofactor is pyruvate. Post-translationally, is synthesized initially as an inactive proenzyme, which is activated by self-cleavage at a specific serine bond to produce a beta-subunit with a hydroxyl group at its C-terminus and an alpha-subunit with a pyruvoyl group at its N-terminus.

It is found in the cytoplasm. The catalysed reaction is L-aspartate + H(+) = beta-alanine + CO2. The protein operates within cofactor biosynthesis; (R)-pantothenate biosynthesis; beta-alanine from L-aspartate: step 1/1. Catalyzes the pyruvoyl-dependent decarboxylation of aspartate to produce beta-alanine. The protein is Aspartate 1-decarboxylase of Syntrophobacter fumaroxidans (strain DSM 10017 / MPOB).